Consider the following 572-residue polypeptide: MAQGPSCASELHYYRALDHANAGFATGTYHLKDDLHLATPPPHPSEAPVVNPNPLATVPTPPTSGVKLSLVSVGQRNKLPVFTSKEKVTAPPFADGNPALAAIPTKDGLKRRKPKNNIIKSSSSFVSRVITHEASSKRLNDRNPDGLFAFANINRAFQWLDLSSKNKEEPLAKILFTKAHMLTHDINELTKSSSHIDIAMGSSAGDIIWYEPISQKYARINKNGVVSNSPVTHIKWIPGSENMFMAAHANGQLVVYDKEKEDALFTPEISNHSAEAMKASSRLPLQVLKSVNSRNQKTNPVALWKLANQKISQFAFSPDQRHLAVVLEDGSLRVMDYLKEEVLDIFRSYYGGLICVCWSPDGKYIVTGGQDDLVTIWSFPERKIVARCQGHNSWVSTVAFDPWRCDERTYRFGSVGDDCRLLLWDFSVGMLHRPRAHQASARQRTSMIASNTQHFNRHRADSASNRMRSDSQRTADTYNDYDSAVRHPVEPRARTALLPPIMSKIVGDDPICWLGFQEDSIMTSSLEGHIRTWDRPREGINDSYNGNTSSPAISTSAAGSGSGIADSAMGSL.

Residues 36–61 form a disordered region; that stretch reads HLATPPPHPSEAPVVNPNPLATVPTP. 4 WD repeats span residues 226 to 266, 306 to 347, 348 to 387, and 390 to 434; these read VSNS…ALFT, LANQ…DIFR, SYYG…IVAR, and GHNS…LHRP. Disordered regions lie at residues 458-486 and 541-572; these read HRAD…SAVR and NDSY…MGSL. Residues 506 to 543 form a WD 5 repeat; that stretch reads VGDDPICWLGFQEDSIMTSSLEGHIRTWDRPREGINDS. The span at 549–572 shows a compositional bias: low complexity; it reads SSPAISTSAAGSGSGIADSAMGSL.

It belongs to the WD repeat creC family. In terms of assembly, interacts with creB.

In terms of biological role, component of the regulatory network controlling carbon source utilization through ubiquitination and deubiquitination involving creA, creB, creC, creD and acrB. Required to prevent the proteolysis of the CreB deubiquitinating enzyme in the absence of carbon catabolite repression. CreB deubiquitinating enzyme stabilized in a complex with the CreC leads to the expression of genes such as those in the proline and quinate pathways. In Aspergillus flavus (strain ATCC 200026 / FGSC A1120 / IAM 13836 / NRRL 3357 / JCM 12722 / SRRC 167), this protein is Probable catabolite repression protein creC (creC).